The primary structure comprises 338 residues: Alcohol dehydrogenase (338 aa).

8 residues coordinate Zn(2+): C38, H61, E62, C92, C95, C98, C106, and C148.

Belongs to the zinc-containing alcohol dehydrogenase family. As to quaternary structure, homotetramer. Zn(2+) serves as cofactor.

The catalysed reaction is a primary alcohol + NAD(+) = an aldehyde + NADH + H(+). It catalyses the reaction a secondary alcohol + NAD(+) = a ketone + NADH + H(+). It carries out the reaction ethanol + NAD(+) = acetaldehyde + NADH + H(+). The enzyme catalyses 1-propanol + NAD(+) = propanal + NADH + H(+). The catalysed reaction is butan-1-ol + NAD(+) = butanal + NADH + H(+). It catalyses the reaction propan-2-ol + NAD(+) = acetone + NADH + H(+). Psychrophilic alcohol dehydrogenase that exhibits a wide range of substrate specificity, oxidizing mainly primary and secondary aliphatic alcohols, utilizing NAD(+) as a cosubstrate. In vitro, shows highest reaction rates for ethanol as a substrate and gradually decreases its reaction rates as the length and branching of the carbon chain of the alcohol substrates increase. To a lesser extent, is also able to reduce aldehydes and ketones. Do not catalyze the further oxidation of aldehydes to carboxylic acids. Cannot use NADP(+) instead of NAD(+). The protein is Alcohol dehydrogenase of Moraxella sp. (strain TAE123).